Consider the following 192-residue polypeptide: dTTP/UTP pyrophosphatase (192 aa).

Asp-75 (proton acceptor) is an active-site residue.

This sequence belongs to the Maf family. YhdE subfamily. The cofactor is a divalent metal cation.

Its subcellular location is the cytoplasm. The catalysed reaction is dTTP + H2O = dTMP + diphosphate + H(+). It catalyses the reaction UTP + H2O = UMP + diphosphate + H(+). Functionally, nucleoside triphosphate pyrophosphatase that hydrolyzes dTTP and UTP. May have a dual role in cell division arrest and in preventing the incorporation of modified nucleotides into cellular nucleic acids. The sequence is that of dTTP/UTP pyrophosphatase from Bdellovibrio bacteriovorus (strain ATCC 15356 / DSM 50701 / NCIMB 9529 / HD100).